Reading from the N-terminus, the 56-residue chain is Small ribosomal subunit protein uS14 (56 aa).

Positions 21, 24, 39, and 42 each coordinate Zn(2+).

It belongs to the universal ribosomal protein uS14 family. Zinc-binding uS14 subfamily. Part of the 30S ribosomal subunit. The cofactor is Zn(2+).

Functionally, binds 16S rRNA, required for the assembly of 30S particles. This Pyrococcus abyssi (strain GE5 / Orsay) protein is Small ribosomal subunit protein uS14.